A 121-amino-acid chain; its full sequence is Large ribosomal subunit protein uL22 (121 aa).

Belongs to the universal ribosomal protein uL22 family. As to quaternary structure, part of the 50S ribosomal subunit.

Functionally, this protein binds specifically to 23S rRNA; its binding is stimulated by other ribosomal proteins, e.g. L4, L17, and L20. It is important during the early stages of 50S assembly. It makes multiple contacts with different domains of the 23S rRNA in the assembled 50S subunit and ribosome. Its function is as follows. The globular domain of the protein is located near the polypeptide exit tunnel on the outside of the subunit, while an extended beta-hairpin is found that lines the wall of the exit tunnel in the center of the 70S ribosome. This Synechococcus sp. (strain WH7803) protein is Large ribosomal subunit protein uL22.